The primary structure comprises 494 residues: UDP-glucose 6-dehydrogenase (494 aa).

Residues 11–16, Asp-36, Arg-41, and 89–93 each bind NAD(+); these read GAGYVG and VNTPT. The tract at residues 88–110 is disordered; sequence SVNTPTKTYGMGKGRAADLKYIE. Lys-107 is subject to N6-acetyllysine. The allosteric switch region stretch occupies residues 129–135; the sequence is KSTVPVR. 130-132 lines the NAD(+) pocket; sequence STV. Glu-161 serves as the catalytic Proton donor/acceptor. Residues 161–165, 220–224, Arg-260, and 267–273 each bind substrate; these read EFLAE, KLTAN, and KASVGFG. Glu-165 is an NAD(+) binding site. Lys-220 acts as the Proton donor/acceptor in catalysis. The active-site Nucleophile is the Cys-276. An NAD(+)-binding site is contributed by 276-279; the sequence is CFQK. The interval 321–325 is important for formation of active hexamer structure; that stretch reads SLFNT. 338 to 339 provides a ligand contact to substrate; that stretch reads FK. Residue Arg-346 participates in NAD(+) binding. A substrate-binding site is contributed by Arg-442. The disordered stretch occupies residues 466 to 494; that stretch reads VSSKRIPYAPSGEIPKFSLQDMPNKKPRV. The residue at position 476 (Ser-476) is a Phosphoserine.

It belongs to the UDP-glucose/GDP-mannose dehydrogenase family. As to quaternary structure, homohexamer.

It catalyses the reaction UDP-alpha-D-glucose + 2 NAD(+) + H2O = UDP-alpha-D-glucuronate + 2 NADH + 3 H(+). It functions in the pathway nucleotide-sugar biosynthesis; UDP-alpha-D-glucuronate biosynthesis; UDP-alpha-D-glucuronate from UDP-alpha-D-glucose: step 1/1. UDP-alpha-D-xylose (UDX) acts as a feedback inhibitor. It binds at the same site as the substrate, but functions as allosteric inhibitor by triggering a conformation change that disrupts the active hexameric ring structure and gives rise to an inactive, horseshoe-shaped hexamer. Its function is as follows. Catalyzes the formation of UDP-alpha-D-glucuronate, a constituent of complex glycosaminoglycans. Required for the biosynthesis of chondroitin sulfate and heparan sulfate. Required for embryonic development via its role in the biosynthesis of glycosaminoglycans. Required for proper brain and neuronal development. The sequence is that of UDP-glucose 6-dehydrogenase (UGDH) from Bos taurus (Bovine).